Reading from the N-terminus, the 101-residue chain is Ascorbate-specific PTS system EIIB component (101 aa).

Positions Val3–Phe96 constitute a PTS EIIB type-2 domain. Catalysis depends on Cys9, which acts as the Phosphocysteine intermediate. A Phosphocysteine modification is found at Cys9.

The protein localises to the cytoplasm. It carries out the reaction N(pros)-phospho-L-histidyl-[protein] + L-ascorbate(out) = L-ascorbate 6-phosphate(in) + L-histidyl-[protein]. In terms of biological role, the phosphoenolpyruvate-dependent sugar phosphotransferase system (sugar PTS), a major carbohydrate active transport system, catalyzes the phosphorylation of incoming sugar substrates concomitantly with their translocation across the cell membrane. The enzyme II UlaABC PTS system is involved in ascorbate transport. The sequence is that of Ascorbate-specific PTS system EIIB component (ulaB) from Shigella dysenteriae serotype 1 (strain Sd197).